A 609-amino-acid polypeptide reads, in one-letter code: 2',5'-phosphodiesterase 12 (609 aa).

Residues 1-16 constitute a mitochondrion transit peptide; it reads MWRLPGVRAALRGVRT. Residues 203–231 are disordered; it reads PRAAEPEGGGPSSSSPSSPSPGWTETGVD. Over residues 214–224 the composition is skewed to low complexity; it reads SSSSPSSPSPG. Ser-217 is modified (phosphoserine). Mg(2+)-binding residues include Glu-351, Asp-496, and Asn-498. Asp-496 (proton donor/acceptor) is an active-site residue.

This sequence belongs to the CCR4/nocturin family. Mg(2+) serves as cofactor. Liver.

The protein localises to the mitochondrion matrix. It catalyses the reaction Exonucleolytic cleavage of poly(A) to 5'-AMP.. Its function is as follows. Enzyme that cleaves 2',5'-phosphodiester bond linking adenosines of the 5'-triphosphorylated oligoadenylates, triphosphorylated oligoadenylates referred as 2-5A modulates the 2-5A system. Degrades triphosphorylated 2-5A to produce AMP and ATP. Also cleaves 3',5'-phosphodiester bond of oligoadenylates. Plays a role as a negative regulator of the 2-5A system that is one of the major pathways for antiviral and antitumor functions induced by interferons (IFNs). Suppression of this enzyme increases cellular 2-5A levels and decreases viral replication in cultured small-airway epithelial cells. In Bos taurus (Bovine), this protein is 2',5'-phosphodiesterase 12 (PDE12).